The sequence spans 62 residues: Large ribosomal subunit protein uL29 (62 aa).

Belongs to the universal ribosomal protein uL29 family.

The sequence is that of Large ribosomal subunit protein uL29 from Helicobacter hepaticus (strain ATCC 51449 / 3B1).